The primary structure comprises 394 residues: ATP phosphoribosyltransferase regulatory subunit (394 aa).

It belongs to the class-II aminoacyl-tRNA synthetase family. HisZ subfamily. In terms of assembly, heteromultimer composed of HisG and HisZ subunits.

It localises to the cytoplasm. Its pathway is amino-acid biosynthesis; L-histidine biosynthesis; L-histidine from 5-phospho-alpha-D-ribose 1-diphosphate: step 1/9. In terms of biological role, required for the first step of histidine biosynthesis. May allow the feedback regulation of ATP phosphoribosyltransferase activity by histidine. This is ATP phosphoribosyltransferase regulatory subunit from Pseudomonas aeruginosa (strain LESB58).